A 414-amino-acid chain; its full sequence is Putative transporter AmpG 4 (414 aa).

The next 12 helical transmembrane spans lie at 15 to 35, 44 to 63, 84 to 104, 109 to 129, 150 to 170, 177 to 197, 230 to 250, 268 to 288, 295 to 315, 324 to 344, 360 to 379, and 389 to 409; these read IFIL…TLAV, IAVI…KVFW, WLIL…KENP, TSFY…DIAV, VFGY…LAEI, LTFC…ITVN, FAVT…MLGA, IIAK…GGIV, FKGL…FIWL, ALLI…TALV, YALL…IYAG, and GFFL…MYLN.

The protein belongs to the major facilitator superfamily.

Its subcellular location is the cell inner membrane. The protein is Putative transporter AmpG 4 (ampG4) of Rickettsia conorii (strain ATCC VR-613 / Malish 7).